The chain runs to 99 residues: Acylphosphatase-1 (99 aa).

N-acetylalanine is present on alanine 2. The 91-residue stretch at 9-99 (SVDYEVSGRV…LEHTDFQIRK (91 aa)) folds into the Acylphosphatase-like domain. Residues arginine 24 and asparagine 42 contribute to the active site.

The protein belongs to the acylphosphatase family. Organ-common type isozyme is found in many different tissues.

The enzyme catalyses an acyl phosphate + H2O = a carboxylate + phosphate + H(+). The protein is Acylphosphatase-1 (ACYP1) of Gallus gallus (Chicken).